Reading from the N-terminus, the 1012-residue chain is MTNLSDQTQQIVPFIRSLLMPTTGPASIPDDTLEKHTLRSETSTYNLTVGDTGSGLIVFFPGFPGSIVGAHYTLQGNGNYKFDQMLLTAQNLPASYNYCRLVSRSLTVRSSTLPGGVYALNGTINAVTFQGSLSELTDVSYNGLMSATANINDKIGNVLVGEGVTVLSLPTSYDLGYVRLGDPIPAIGLDPKMVATCDSSDRPRVYTITAADDYQFSSQYQPGGVTITLFSANIDAITSLSVGGELVFRTSVHGLVLGATIYLIGFDGTTVITRAVAANNGLTTGTDNLMPFNLVIPTNEITQPITSIKLEIVTSKSGGQAGDQMSWSARGSLAVTIHGGNYPGALRPVTLVAYERVATGSVVTVAGVSNFELIPNPELAKNLVTEYGRFDPGAMNYTKLILSERDRLGIKTVWPTREYTDFREYFMEVADLNSPLKIAGAFGFKDIIRAIRRIAVPVVSTLFPPAAPLAHAIGEGVDYLLGDEAQAASGTARAASGKARAASGRIRQLTLAADKGYEVVANLFQVPQNPVVDGILASPGVLRGAHNLDCVLREGATLFPVVITTVEDAMTPKALNSKMFAVIEGVREDLQPPSQRGSFIRTLSGHRVYGYAPDGVLPLETGRDYTVVPIDDVWDDSIMLSKDPIPPIVGNSGNLAIAYMDVFRPKVPIHVAMTGALNACGEIEKVSFRSTKLATAHRLGLRLAGPGAFDVNTGPNWATFIKRFPHNPRDWDRLPYLNLPYLPPNAGRQYHLAMAASEFKETPELESAVRAMEAAANVDPLFQSALSVFMWLEENGIVTDMANFALSDPNAHRMRNFLANAPQAGSKSQRAKYGTAGYGVEARGPTPEEAQREKDTRISKKMETMGIYFATPEWVALNGHRGPSPGQVKYWQNKREIPDPNEDYLDYVHAEKSRLASEEQILRAATSIYGAPGQAEPPQAFIDEVAKVYEINHGRGPNQEQMKDLLLTAMEMKHRNPRRALPKPKPKPNAPTQRPPGRLGRWIRTVSDEDLE.

Asp-30 contacts a divalent metal cation. Residues Ala-513 to Ala-755 form the Peptidase S50 domain. Residue Ser-652 is the Nucleophile of the active site. Lys-692 is an active-site residue. Residues Met-970–Glu-1012 form a disordered region. Basic residues predominate over residues Arg-975–Pro-986. Residues Ile-1003–Glu-1012 are interaction with VP1 protein.

Homotrimer. A central divalent metal stabilizes the VP2 trimer. Interacts with host ITGA4/ITGB1. As to quaternary structure, homodimer. Interacts (via C-terminus) with VP1 in the cytoplasm. Interacts with VP2. Post-translationally, specific enzymatic cleavages yield mature proteins. The capsid assembly seems to be regulated by polyprotein processing. The protease VP4 cleaves itself off the polyprotein, thus releasing pre-VP2 and VP3 within the infected cell. During capsid assembly, the C-terminus of pre-VP2 is further processed by VP4, giving rise to VP2, the external capsid protein and three small peptides that all stay closely associated with the capsid.

It localises to the virion. The protein localises to the host cytoplasm. In terms of biological role, capsid protein VP2 self assembles to form an icosahedral capsid with a T=13 symmetry, about 70 nm in diameter, and consisting of 260 VP2 trimers. The capsid encapsulates the genomic dsRNA. VP2 is also involved in attachment and entry into the host cell by interacting with host ITGA4/ITGB1. Its function is as follows. The precursor of VP2 plays an important role in capsid assembly. First, pre-VP2 and VP2 oligomers assemble to form a procapsid. Then, the pre-VP2 intermediates may be processed into VP2 proteins by proteolytic cleavage mediated by VP4 to obtain the mature virion. The final capsid is composed of pentamers and hexamers but VP2 has a natural tendency to assemble into all-pentameric structures. Therefore pre-VP2 may be required to allow formation of the hexameric structures. Protease VP4 is a serine protease that cleaves the polyprotein into its final products. Pre-VP2 is first partially cleaved, and may be completely processed by VP4 upon capsid maturation. Functionally, capsid protein VP3 plays a key role in virion assembly by providing a scaffold for the capsid made of VP2. May self-assemble to form a T=4-like icosahedral inner-capsid composed of at least 180 trimers. Plays a role in genomic RNA packaging by recruiting VP1 into the capsid and interacting with the dsRNA genome segments to form a ribonucleoprotein complex. Additionally, the interaction of the VP3 C-terminal tail with VP1 removes the inherent structural blockade of the polymerase active site. Thus, VP3 can also function as a transcriptional activator. In terms of biological role, structural peptide 1 is a small peptide derived from pre-VP2 C-terminus. It destabilizes and perforates cell membranes, suggesting a role during entry. Its function is as follows. Structural peptide 2 is a small peptide derived from pVP2 C-terminus. It is not essential for the virus viability, but viral growth is affected when missing. Structural peptide 3 is a small peptide derived from pVP2 C-terminus. It is not essential for the virus viability, but viral growth is affected when missing. Functionally, structural peptide 4 is a small peptide derived from pVP2 C-terminus. It is essential for the virus viability. The chain is Structural polyprotein from Avian infectious bursal disease virus (strain Chicken/Cuba/Soroa/1998) (IBDV).